A 348-amino-acid chain; its full sequence is Protein RecA (348 aa).

64 to 71 (GPESSGKT) provides a ligand contact to ATP.

The protein belongs to the RecA family. As to quaternary structure, monomer; forms higher-order oligomers. Interacts with RecU. Interacts with DprA (smf). Interacts with RecD2.

The protein resides in the cytoplasm. It localises to the nucleoid. In terms of biological role, multifunctional protein involved in homologous recombination, DNA repair and competence. Can catalyze the hydrolysis of (d)ATP in the presence of single-stranded (ss)DNA; prefers dATP at least in vitro, catalyzes the dATP-dependent uptake of ssDNA by duplex DNA, and the dATP-dependent hybridization of homologous ssDNA (strand exchange). RecA-ATP cannot catalyze homologous DNA strand exchange; SsbA and DprA activate strand exchange by RecA-ATP. It interacts with LexA causing its activation and leading to its autocatalytic cleavage. Hydrolysis of ATP in the presence of ssDNA is partially inhibited by RecU. Required for DNA transformation; protects transforming DNA from degradation, possibly in combination with DprA. Blocks replication of both leading and lagging strand DNA in the presence of RecO and SsbA; RecD2 is able to overcome this blockage. Functionally, recruited to repair centers (RCs), foci that are the site of double-stranded DNA break(s), after RecN. Concomitant with the appearance of RecO at the RCs, RecA forms threads that extend from RCs toward the opposite cell half, possibly searching for sequence homology along the sister chromosome. The threads disappear after about 2 hours. Thread formation is absolutely dependent on RecJ or AadAB. Thread formation is also dependent on RarA. This Bacillus subtilis (strain 168) protein is Protein RecA.